Reading from the N-terminus, the 1549-residue chain is FERM and PDZ domain-containing protein 1 (1549 aa).

A PDZ domain is found at 57–135 (TVTLDKDVLL…ALSITVVRCT (79 aa)). The 316-residue stretch at 181-496 (NVLKVYLENG…GYYRLFVDPA (316 aa)) folds into the FERM domain. Disordered stretches follow at residues 554–618 (AREE…DDLD), 717–738 (SHLSDSGSESTASRQGAAPPQW), 775–834 (YDAA…YAKS), 913–1046 (STNP…RSEI), 1097–1174 (SLDS…EAQE), 1231–1257 (LSPCQEEPRSADSGHGSPAESKGDDSP), and 1321–1347 (PETEEEDGDPQTHPAAPLTSPPSAGSQ). Over residues 717–730 (SHLSDSGSESTASR) the composition is skewed to polar residues. Residues 924 to 931 (EPETMETK) form an important for interaction with GPSM2 region. Polar residues predominate over residues 950–961 (PSNTENPVTTDG). Positions 962 to 980 (SSASIPHSPHHSNPGSSSP) are enriched in low complexity. Positions 1117 to 1130 (SGKDLGDSKGDRLD) are enriched in basic and acidic residues.

Interacts with GPSM1. Interacts with GPSM2.

Its subcellular location is the cytoplasm. It is found in the cytosol. The protein localises to the cell membrane. Stabilizes membrane-bound GPSM1, and thereby promotes its interaction with GNAI1. This is FERM and PDZ domain-containing protein 1 (Frmpd1) from Mus musculus (Mouse).